Consider the following 100-residue polypeptide: UPF0213 protein YhbQ (100 aa).

The 76-residue stretch at 2-77 folds into the GIY-YIG domain; that stretch reads TPWFLYLIRT…KQLTKRQKER (76 aa).

Belongs to the UPF0213 family.

The protein is UPF0213 protein YhbQ of Escherichia coli O127:H6 (strain E2348/69 / EPEC).